A 455-amino-acid chain; its full sequence is Ribosomal protein uS12 methylthiotransferase RimO (455 aa).

Positions 30-140 (PTIGMVSLGC…VLDAVHGAVP (111 aa)) constitute an MTTase N-terminal domain. Residues cysteine 39, cysteine 75, cysteine 104, cysteine 171, cysteine 175, and cysteine 178 each contribute to the [4Fe-4S] cluster site. A Radical SAM core domain is found at 157-386 (LTPRHFSYLK…MEKAQAISEA (230 aa)). The region spanning 389–455 (AAKVGRRIEV…GEYDLWGRPV (67 aa)) is the TRAM domain.

It belongs to the methylthiotransferase family. RimO subfamily. The cofactor is [4Fe-4S] cluster.

The protein resides in the cytoplasm. It catalyses the reaction L-aspartate(89)-[ribosomal protein uS12]-hydrogen + (sulfur carrier)-SH + AH2 + 2 S-adenosyl-L-methionine = 3-methylsulfanyl-L-aspartate(89)-[ribosomal protein uS12]-hydrogen + (sulfur carrier)-H + 5'-deoxyadenosine + L-methionine + A + S-adenosyl-L-homocysteine + 2 H(+). Functionally, catalyzes the methylthiolation of an aspartic acid residue of ribosomal protein uS12. This is Ribosomal protein uS12 methylthiotransferase RimO from Cereibacter sphaeroides (strain ATCC 17029 / ATH 2.4.9) (Rhodobacter sphaeroides).